The sequence spans 1101 residues: Rho GTPase-activating protein 30 (1101 aa).

Residues C20–F215 enclose the Rho-GAP domain. 3 disordered regions span residues E224 to D243, H300 to G400, and A451 to G529. Positions R308–N318 are enriched in basic and acidic residues. The segment covering L360 to A376 has biased composition (acidic residues). Pro residues predominate over residues A459–P472. Residues D508 to E520 are compositionally biased toward low complexity. S576 carries the post-translational modification Phosphoserine. Disordered stretches follow at residues G621–P906 and C965–N991. 4 stretches are compositionally biased toward basic and acidic residues: residues G658–E694, T701–E735, E759–E770, and A779–S822. Low complexity predominate over residues G976–N991. Phosphoserine is present on S996. Residues L1050–L1101 form a disordered region. Positions P1053–P1069 are enriched in low complexity. Polar residues predominate over residues L1080–N1094.

As to quaternary structure, interacts with RHOU in a GTP-independent manner.

The protein resides in the cytoplasmic vesicle. Its function is as follows. GTPase-activating protein (GAP) for RAC1 and RHOA, but not for CDC42. The protein is Rho GTPase-activating protein 30 (ARHGAP30) of Homo sapiens (Human).